Here is a 389-residue protein sequence, read N- to C-terminus: MESINDVSEICLQLVNLNYSDQLDFKLNLIKQYIPNLLTNQVIASPLVDNYRNKLRFDIGLSNHDLITIGYSLPKKKNTHRYVYSSISMKHLHPKMIQIVSKIELFLRTHEQSWYSIKHGETLLPSMTIRTSFHTEDVMIIFKFKGPQNETVINYFSSDIFYEIIESIEINIVIEFSDCRKIVKGHNYIHEKLDDYIFKITDESFFQVNTLATEVLYNKVLELTMKYIKPTGQDILFDLCCGTGTIGIYLSKIFTKVFGIDIKQSSIIDANHNKLLNNIPNIEFICNPIENVLEKLISECLEKNPDSTFFAVVDPPRTGMHGGVQNTINNCPNLEYLIYVSCNVVTFKRDMEILGKQFEAIETICLDLFPHTPHCELIVVLKKIDLSIY.

S-adenosyl-L-methionine is bound by residues Gln-207, Asp-261, and Asp-314. Cys-342 serves as the catalytic Nucleophile.

This sequence belongs to the class I-like SAM-binding methyltransferase superfamily. RNA M5U methyltransferase family.

In Acanthamoeba polyphaga (Amoeba), this protein is Putative RNA methyltransferase R405.